A 134-amino-acid polypeptide reads, in one-letter code: Profilin-2 (134 aa).

Cys-13 and Cys-118 form a disulfide bridge. The Involved in PIP2 interaction signature appears at 84 to 100; it reads AVIRGKKGSGGITIKKT. At Thr-114 the chain carries Phosphothreonine.

The protein belongs to the profilin family. As to quaternary structure, occurs in many kinds of cells as a complex with monomeric actin in a 1:1 ratio. Phosphorylated by MAP kinases.

Its subcellular location is the cytoplasm. It localises to the cytoskeleton. Functionally, binds to actin and affects the structure of the cytoskeleton. At high concentrations, profilin prevents the polymerization of actin, whereas it enhances it at low concentrations. The sequence is that of Profilin-2 from Olea europaea (Common olive).